The chain runs to 471 residues: O-acetyltransferase astG (471 aa).

Belongs to the fumigaclavine B O-acetyltransferase family. As to quaternary structure, monomer.

It catalyses the reaction dideacetyl astellolide A + acetyl-CoA = 14-deacetyl astellolide A + CoA. The enzyme catalyses dideacetyl astellolide B + acetyl-CoA = 14-deacetyl astellolide B + CoA. It participates in secondary metabolite biosynthesis; terpenoid biosynthesis. Its function is as follows. O-acetyltransferase; part of the gene cluster that mediates the biosynthesis of astellolides, drimane-type sesquiterpene esters that show antimicrobial, anti-inflammatory, and anti-tumor activities. The first step in astellolide biosynthesis is performed by the sesquiterpene cyclase astC that catalyzes the formation of drimanyl pyrophosphate from farnesyl pyrophosphate. Drimanyl pyrophosphate is then dephosphorylated by the sesquiterpene phosphatase astI to produce drimanyl monophosphate which is further dephosphorylated to drim-8-ene-11-ol by atsK. Drim-8-ene-11-ol is converted to confertifolin, probably by the cytochrome P450 monooxygenase astD and/or the dehydrogenase astE. The cytochrome P450 monooxygenases astB, astF and astJ then hydroxylate confertifolin at C6, C14, or C15 to form trihydroxy confertifolin. The nonribosomal peptide synthetase astA catalyzes ester bond formation between trihydroxy contifolin and benzoic acid (BA) or 4-hydroxy benzoic acid (4HBA), leading to the formation of dideacetyl astellolides A and B, respectively. Finally, the O-acetyltransferase astG converts dideacetyl astellolides A and B into deacetyl astellolides A and B. The protein is O-acetyltransferase astG of Aspergillus oryzae (strain ATCC 42149 / RIB 40) (Yellow koji mold).